A 218-amino-acid chain; its full sequence is Octanoyltransferase (218 aa).

The 187-residue stretch at 32 to 218 (GDAPEAVWLL…LRTFSRSFPD (187 aa)) folds into the BPL/LPL catalytic domain. Substrate-binding positions include 71–78 (RGGQYTYH), 151–153 (AIG), and 164–166 (GLS). Cys182 serves as the catalytic Acyl-thioester intermediate.

Belongs to the LipB family.

The protein localises to the cytoplasm. The enzyme catalyses octanoyl-[ACP] + L-lysyl-[protein] = N(6)-octanoyl-L-lysyl-[protein] + holo-[ACP] + H(+). It participates in protein modification; protein lipoylation via endogenous pathway; protein N(6)-(lipoyl)lysine from octanoyl-[acyl-carrier-protein]: step 1/2. In terms of biological role, catalyzes the transfer of endogenously produced octanoic acid from octanoyl-acyl-carrier-protein onto the lipoyl domains of lipoate-dependent enzymes. Lipoyl-ACP can also act as a substrate although octanoyl-ACP is likely to be the physiological substrate. The protein is Octanoyltransferase of Cereibacter sphaeroides (strain ATCC 17025 / ATH 2.4.3) (Rhodobacter sphaeroides).